A 351-amino-acid polypeptide reads, in one-letter code: Methylxanthine N1-demethylase NdmA (351 aa).

The Rieske domain maps to 17 to 125; that stretch reads WHPVCTVTEL…CEERYGLIWI (109 aa). [2Fe-2S] cluster-binding residues include Cys62, His64, Cys81, and His84.

Requires [2Fe-2S] cluster as cofactor.

It carries out the reaction caffeine + NADH + O2 + H(+) = theobromine + formaldehyde + NAD(+) + H2O. The enzyme catalyses caffeine + NADPH + O2 + H(+) = theobromine + formaldehyde + NADP(+) + H2O. The catalysed reaction is theophylline + NADH + O2 + H(+) = 3-methylxanthine + formaldehyde + NAD(+) + H2O. It catalyses the reaction theophylline + NADPH + O2 + H(+) = 3-methylxanthine + formaldehyde + NADP(+) + H2O. It carries out the reaction 1,7-dimethylxanthine + NADH + O2 + H(+) = 7-methylxanthine + formaldehyde + NAD(+) + H2O. The enzyme catalyses 1,7-dimethylxanthine + NADPH + O2 + H(+) = 7-methylxanthine + formaldehyde + NADP(+) + H2O. Its pathway is alkaloid degradation. In terms of biological role, involved in the caffeine degradation, which is the essential first step for assimilating the carbon and nitrogen in caffeine. Catalyzes the N1-demethylation of caffeine to produce theobromine and formaldehyde. Also catalyzes the N1-demethylation of theophylline, paraxanthine, and 1-methylxanthine to 3-methylxanthine, 7-methylxanthine, and xanthine, respectively. NADH is the preferred substrate. This chain is Methylxanthine N1-demethylase NdmA (ndmA), found in Pseudomonas putida (Arthrobacter siderocapsulatus).